Reading from the N-terminus, the 394-residue chain is Glycerol-1-phosphate dehydrogenase [NAD(P)+] (394 aa).

Residues D54, 116–120, and 138–141 contribute to the NAD(+) site; these read GTIHD and TAPS. D143 provides a ligand contact to substrate. Position 147 (S147) interacts with NAD(+). D190 is a substrate binding site. Ni(2+) contacts are provided by D190 and H270. H274 is a substrate binding site. H290 is a Ni(2+) binding site.

This sequence belongs to the glycerol-1-phosphate dehydrogenase family. As to quaternary structure, homodimer. Ni(2+) serves as cofactor.

It is found in the cytoplasm. The catalysed reaction is sn-glycerol 1-phosphate + NAD(+) = dihydroxyacetone phosphate + NADH + H(+). The enzyme catalyses sn-glycerol 1-phosphate + NADP(+) = dihydroxyacetone phosphate + NADPH + H(+). Its function is as follows. Catalyzes the NAD(P)H-dependent reduction of dihydroxyacetonephosphate (DHAP or glycerone phosphate) to glycerol 1-phosphate (G1P). The G1P thus generated is probably used for the synthesis of phosphoglycerolipids in Gram-positive bacterial species. Prefers NADH over NADPH as coenzyme. Is also able to catalyze the reverse reaction, i.e. the NAD(+)-dependent oxidation of G1P but not of G3P. Does not possess glycerol dehydrogenase activity. This Bacillus subtilis (strain 168) protein is Glycerol-1-phosphate dehydrogenase [NAD(P)+] (egsA).